Here is a 376-residue protein sequence, read N- to C-terminus: MYG1 exonuclease (376 aa).

A mitochondrion-targeting transit peptide spans 1–47 (MGHRFLRGLLTLLLPPPPLYTRHRMLGPESVPPPKRSRSKLMAPPRI). Residue Ser-120 is modified to Phosphoserine. An N6-acetyllysine mark is found at Lys-267 and Lys-273.

It belongs to the MYG1 family. In terms of tissue distribution, ubiquitously expressed, with highest levels in testis.

The protein localises to the nucleus. Its subcellular location is the nucleoplasm. The protein resides in the mitochondrion matrix. It localises to the nucleolus. Functionally, 3'-5' RNA exonuclease which cleaves in situ on specific transcripts in both nucleus and mitochondrion. Involved in regulating spatially segregated organellar RNA processing, acts as a coordinator of nucleo-mitochondrial crosstalk. In nucleolus, processes pre-ribosomal RNA involved in ribosome assembly and alters cytoplasmic translation. In mitochondrial matrix, processes 3'-termini of the mito-ribosomal and messenger RNAs and controls translation of mitochondrial proteins. The chain is MYG1 exonuclease from Homo sapiens (Human).